Here is a 183-residue protein sequence, read N- to C-terminus: Translation initiation factor IF-3 (183 aa).

Belongs to the IF-3 family. As to quaternary structure, monomer.

It localises to the cytoplasm. Functionally, IF-3 binds to the 30S ribosomal subunit and shifts the equilibrium between 70S ribosomes and their 50S and 30S subunits in favor of the free subunits, thus enhancing the availability of 30S subunits on which protein synthesis initiation begins. In Azobacteroides pseudotrichonymphae genomovar. CFP2, this protein is Translation initiation factor IF-3.